A 171-amino-acid chain; its full sequence is Orange carotenoid-binding domain-containing protein (171 aa).

Positions 21-171 (GDAVASTITV…ADMGVDPLAD (151 aa)) constitute an OCP N-terminal domain.

It belongs to the orange carotenoid-binding protein family. Requires 3'-hydroxyechinenone as cofactor.

It is found in the cellular thylakoid membrane. Its function is as follows. Might act as a photo-protectant, protecting against damage induced by excess light via a process known as non-photochemical quenching (NPQ). The protein is Orange carotenoid-binding domain-containing protein of Nostoc sp. (strain PCC 7120 / SAG 25.82 / UTEX 2576).